The chain runs to 296 residues: Protoheme IX farnesyltransferase (296 aa).

The Cytoplasmic segment spans residues 1–9 (MIFKQYLQV). Residues 10-28 (TKPGIIFGNLISVIGGFLL) form a helical membrane-spanning segment. Topologically, residues 29-37 (ASKGSIDYP) are periplasmic. Residues 38–56 (LFIYTLVGVSLVVASGCVF) form a helical membrane-spanning segment. At 57 to 78 (NNYIDRDIDRKMERTKNRVLVK) the chain is on the cytoplasmic side. A helical transmembrane segment spans residues 79–97 (GLISPAVSLVYATLLGIAG). Over 98–107 (FMLLWFGANP) the chain is Periplasmic. The chain crosses the membrane as a helical span at residues 108–126 (LACWLGVMGFVVYVGVYSL). Residues 127 to 197 (YMKRHSVYGT…YQAANIPVLP (71 aa)) lie on the Cytoplasmic side of the membrane. A helical transmembrane segment spans residues 198 to 216 (VVKGISVAKNHITLYIIAF). Topologically, residues 217–228 (AVATLMLSLGGY) are periplasmic. Residues 229–247 (AGYKYLVVAAAVSVWWLGM) traverse the membrane as a helical segment. The Cytoplasmic portion of the chain corresponds to 248-268 (ALRGYKVADDRIWARKLFGFS). A helical membrane pass occupies residues 269–287 (IIAITALSVMMSVDFMVPD). Topologically, residues 288 to 296 (SHTLLAAVW) are periplasmic.

The protein belongs to the UbiA prenyltransferase family. Protoheme IX farnesyltransferase subfamily.

The protein localises to the cell inner membrane. It catalyses the reaction heme b + (2E,6E)-farnesyl diphosphate + H2O = Fe(II)-heme o + diphosphate. Its pathway is porphyrin-containing compound metabolism; heme O biosynthesis; heme O from protoheme: step 1/1. Converts heme B (protoheme IX) to heme O by substitution of the vinyl group on carbon 2 of heme B porphyrin ring with a hydroxyethyl farnesyl side group. In Escherichia coli O1:K1 / APEC, this protein is Protoheme IX farnesyltransferase.